The primary structure comprises 53 residues: Sec-independent protein translocase protein TatA (53 aa).

Residues 1–21 (MGMSVSHLLIVLLIIFVLFGA) form a helical membrane-spanning segment.

Belongs to the TatA/E family. In terms of assembly, the Tat system comprises two distinct complexes: a TatABC complex, containing multiple copies of TatA, TatB and TatC subunits, and a separate TatA complex, containing only TatA subunits. Substrates initially bind to the TatABC complex, which probably triggers association of the separate TatA complex to form the active translocon.

It localises to the cell inner membrane. Part of the twin-arginine translocation (Tat) system that transports large folded proteins containing a characteristic twin-arginine motif in their signal peptide across membranes. TatA could form the protein-conducting channel of the Tat system. This chain is Sec-independent protein translocase protein TatA, found in Rickettsia massiliae (strain Mtu5).